The following is a 409-amino-acid chain: Elongation factor Tu, chloroplastic (409 aa).

The tr-type G domain maps to 10-214 (KPHINIGTIG…AVDAYIPTPE (205 aa)). The G1 stretch occupies residues 19 to 26 (GHVDHGKT). 19–26 (GHVDHGKT) contacts GTP. Mg(2+) is bound at residue T26. The G2 stretch occupies residues 60–64 (GITIN). A G3 region spans residues 81-84 (DCPG). Residues 81–85 (DCPGH) and 136–139 (NKQD) contribute to the GTP site. The interval 136-139 (NKQD) is G4. Positions 174 to 176 (SRL) are G5.

It belongs to the TRAFAC class translation factor GTPase superfamily. Classic translation factor GTPase family. EF-Tu/EF-1A subfamily.

Its subcellular location is the plastid. It is found in the chloroplast. It catalyses the reaction GTP + H2O = GDP + phosphate + H(+). Functionally, GTP hydrolase that promotes the GTP-dependent binding of aminoacyl-tRNA to the A-site of ribosomes during protein biosynthesis. In Stephanocyclus meneghinianus (Diatom), this protein is Elongation factor Tu, chloroplastic (tufA).